Reading from the N-terminus, the 673-residue chain is Pesticin receptor (673 aa).

The first 22 residues, 1-22, serve as a signal peptide directing secretion; the sequence is MKMTRLYPLALGGLLLPAIANA. The short motif at 30–37 is the TonB box element; the sequence is STLVVTAS. Residues 41–155 enclose the TBDR plug domain; the sequence is SRSASANNVS…QGGIINIVTQ (115 aa). Residues 160 to 672 form the TBDR beta-barrel domain; it reads TPRGYIEGGV…TVGINTRIDF (513 aa). A TonB C-terminal box motif is present at residues 657–673; sequence QVNMGRTVGINTRIDFF.

It belongs to the TonB-dependent receptor family.

Its subcellular location is the cell outer membrane. In terms of biological role, receptor for the bacteriocin pesticin and for the siderophore yersiniabactin. In Yersinia pestis, this protein is Pesticin receptor (fyuA).